The sequence spans 193 residues: Probable chorismate pyruvate-lyase (193 aa).

Positions 81, 119, and 177 each coordinate substrate.

This sequence belongs to the UbiC family.

The protein localises to the cytoplasm. The enzyme catalyses chorismate = 4-hydroxybenzoate + pyruvate. It functions in the pathway cofactor biosynthesis; ubiquinone biosynthesis. Its function is as follows. Removes the pyruvyl group from chorismate, with concomitant aromatization of the ring, to provide 4-hydroxybenzoate (4HB) for the ubiquinone pathway. The protein is Probable chorismate pyruvate-lyase of Idiomarina loihiensis (strain ATCC BAA-735 / DSM 15497 / L2-TR).